Consider the following 143-residue polypeptide: Nucleoside diphosphate kinase (143 aa).

Positions 11, 59, 87, 93, 104, and 114 each coordinate ATP. His-117 functions as the Pros-phosphohistidine intermediate in the catalytic mechanism.

Belongs to the NDK family. In terms of assembly, homotetramer. It depends on Mg(2+) as a cofactor.

It is found in the cytoplasm. The catalysed reaction is a 2'-deoxyribonucleoside 5'-diphosphate + ATP = a 2'-deoxyribonucleoside 5'-triphosphate + ADP. It carries out the reaction a ribonucleoside 5'-diphosphate + ATP = a ribonucleoside 5'-triphosphate + ADP. Major role in the synthesis of nucleoside triphosphates other than ATP. The ATP gamma phosphate is transferred to the NDP beta phosphate via a ping-pong mechanism, using a phosphorylated active-site intermediate. The sequence is that of Nucleoside diphosphate kinase from Shewanella baltica (strain OS223).